A 536-amino-acid chain; its full sequence is CTP synthase (536 aa).

The amidoligase domain stretch occupies residues 1-268; the sequence is MSFKSIFLTG…VDFLLSKFGF (268 aa). Residue serine 14 coordinates CTP. A UTP-binding site is contributed by serine 14. 15-20 contributes to the ATP binding site; sequence SLGKGL. Residue tyrosine 55 participates in L-glutamine binding. Aspartate 72 contacts ATP. The Mg(2+) site is built by aspartate 72 and glutamate 142. CTP is bound by residues 149-151, 188-193, and lysine 224; these read DIE and KTKPTQ. Residues 188 to 193 and lysine 224 contribute to the UTP site; that span reads KTKPTQ. A Glutamine amidotransferase type-1 domain is found at 294-532; sequence RIGLVGKYLE…LSAALDYSLE (239 aa). Glycine 353 contacts L-glutamine. Catalysis depends on cysteine 380, which acts as the Nucleophile; for glutamine hydrolysis. Residues 381–384, glutamate 404, and arginine 460 each bind L-glutamine; that span reads LGMQ. Active-site residues include histidine 505 and glutamate 507.

Belongs to the CTP synthase family. Homotetramer.

The enzyme catalyses UTP + L-glutamine + ATP + H2O = CTP + L-glutamate + ADP + phosphate + 2 H(+). The catalysed reaction is L-glutamine + H2O = L-glutamate + NH4(+). It carries out the reaction UTP + NH4(+) + ATP = CTP + ADP + phosphate + 2 H(+). Its pathway is pyrimidine metabolism; CTP biosynthesis via de novo pathway; CTP from UDP: step 2/2. With respect to regulation, allosterically activated by GTP, when glutamine is the substrate; GTP has no effect on the reaction when ammonia is the substrate. The allosteric effector GTP functions by stabilizing the protein conformation that binds the tetrahedral intermediate(s) formed during glutamine hydrolysis. Inhibited by the product CTP, via allosteric rather than competitive inhibition. Functionally, catalyzes the ATP-dependent amination of UTP to CTP with either L-glutamine or ammonia as the source of nitrogen. Regulates intracellular CTP levels through interactions with the four ribonucleotide triphosphates. This is CTP synthase from Chlamydia muridarum (strain MoPn / Nigg).